The following is a 524-amino-acid chain: MELPESAWEQCVSSLQSELPAQQFNTWIRPLRVQQAEASNQLHLIAPNRFVLDWVNDKFKSRIDELLSSADHHPITSVEISVAPRRSTSFETNQGVAARQKRQQEAPRQNIASSQPSNSYSRQPQQPAVEMPAESQMAQVELLPAAPPAPLNNGYNTESFAQPYNDNPMGQGKVDKVDVEGGLQHKSNLNPTFIFDNFVVGKSNQLGLAAATQVAENPGGSYNPLFIYGGVGLGKTHLMHAVGNALCVRKPGAKVVYLHSERFVADMVKALQLNAINDFKRYYRSVDALLIDDIQFFAGKERSQEEFFHTFNALLEGGQQIILTCDRYPKEINGLEERLKSRFGWGLTVAIEPPELETRVAILKRKAEQVGAPLPNDAAFFIAQRIRSNVRELEGALKRVIANAHFTGRDISVELVREALKDLLALQDRLVSIDNIQRVVAEYYKIKVSDLHSKRRSRSVARPRQVAMYLAKDLTHHSLPEIGEAFGGRDHTTVLHACRKIKEMIESDADIREDVKNLLRTLTT.

Positions 1–73 (MELPESAWEQ…DELLSSADHH (73 aa)) are domain I, interacts with DnaA modulators. Positions 73 to 187 (HPITSVEISV…DVEGGLQHKS (115 aa)) are domain II. Polar residues-rich tracts occupy residues 86 to 95 (RSTSFETNQG), 106 to 126 (APRQNIASSQPSNSYSRQPQQ), and 153 to 165 (NGYNTESFAQPYN). Residues 86–173 (RSTSFETNQG…YNDNPMGQGK (88 aa)) are disordered. A domain III, AAA+ region region spans residues 188–404 (NLNPTFIFDN…GALKRVIANA (217 aa)). ATP contacts are provided by Gly-232, Gly-234, Lys-235, and Thr-236. The tract at residues 405–524 (HFTGRDISVE…VKNLLRTLTT (120 aa)) is domain IV, binds dsDNA.

It belongs to the DnaA family. Oligomerizes as a right-handed, spiral filament on DNA at oriC.

It is found in the cytoplasm. In terms of biological role, plays an essential role in the initiation and regulation of chromosomal replication. ATP-DnaA binds to the origin of replication (oriC) to initiate formation of the DNA replication initiation complex once per cell cycle. Binds the DnaA box (a 9 base pair repeat at the origin) and separates the double-stranded (ds)DNA. Forms a right-handed helical filament on oriC DNA; dsDNA binds to the exterior of the filament while single-stranded (ss)DNA is stabiized in the filament's interior. The ATP-DnaA-oriC complex binds and stabilizes one strand of the AT-rich DNA unwinding element (DUE), permitting loading of DNA polymerase. After initiation quickly degrades to an ADP-DnaA complex that is not apt for DNA replication. Binds acidic phospholipids. In Saccharophagus degradans (strain 2-40 / ATCC 43961 / DSM 17024), this protein is Chromosomal replication initiator protein DnaA.